The following is a 224-amino-acid chain: dTDP-fucosamine acetyltransferase (224 aa).

The 131-residue stretch at 94–224 (PALRQLASAA…VESTAYWLYR (131 aa)) folds into the N-acetyltransferase domain. Acetyl-CoA contacts are provided by residues 168-174 (LAGRGAG), N201, and R207. Y208 serves as the catalytic Proton donor.

It belongs to the WecD family. As to quaternary structure, homodimer.

It carries out the reaction dTDP-4-amino-4,6-dideoxy-alpha-D-galactose + acetyl-CoA = dTDP-4-acetamido-4,6-dideoxy-alpha-D-galactose + CoA + H(+). The protein operates within bacterial outer membrane biogenesis; enterobacterial common antigen biosynthesis. Functionally, catalyzes the acetylation of dTDP-fucosamine (dTDP-4-amino-4,6-dideoxy-D-galactose) to dTDP-Fuc4NAc, which is utilized in the biosynthesis of the enterobacterial common antigen (ECA). This Escherichia coli O6:H1 (strain CFT073 / ATCC 700928 / UPEC) protein is dTDP-fucosamine acetyltransferase.